We begin with the raw amino-acid sequence, 317 residues long: Putative ribosomal protein uL10-like (317 aa).

The residue at position 24 (Y24) is a Phosphotyrosine. T59 is modified (phosphothreonine). The disordered stretch occupies residues 292–317; the sequence is AAAPAKVEAKEESEESDEDMGFGLFD. K297 is covalently cross-linked (Glycyl lysine isopeptide (Lys-Gly) (interchain with G-Cter in SUMO1); alternate). K297 participates in a covalent cross-link: Glycyl lysine isopeptide (Lys-Gly) (interchain with G-Cter in SUMO2); alternate. Residues 302-311 are compositionally biased toward acidic residues; it reads EESEESDEDM. 2 positions are modified to phosphoserine: S304 and S307.

It belongs to the universal ribosomal protein uL10 family. P0 forms a pentameric complex by interaction with dimers of P1 and P2.

Its function is as follows. Ribosomal protein P0 is the functional equivalent of E.coli protein L10. This Homo sapiens (Human) protein is Putative ribosomal protein uL10-like (RPLP0P6).